Here is a 315-residue protein sequence, read N- to C-terminus: Transaldolase (315 aa).

Lys131 serves as the catalytic Schiff-base intermediate with substrate.

Belongs to the transaldolase family. Type 1 subfamily. As to quaternary structure, homodimer.

Its subcellular location is the cytoplasm. It catalyses the reaction D-sedoheptulose 7-phosphate + D-glyceraldehyde 3-phosphate = D-erythrose 4-phosphate + beta-D-fructose 6-phosphate. It functions in the pathway carbohydrate degradation; pentose phosphate pathway; D-glyceraldehyde 3-phosphate and beta-D-fructose 6-phosphate from D-ribose 5-phosphate and D-xylulose 5-phosphate (non-oxidative stage): step 2/3. Transaldolase is important for the balance of metabolites in the pentose-phosphate pathway. The chain is Transaldolase from Haemophilus ducreyi (strain 35000HP / ATCC 700724).